The chain runs to 357 residues: DNA polymerase IV 2 (357 aa).

The 181-residue stretch at 4 to 184 (IIHVDMDAFY…LAVKKFHGVG (181 aa)) folds into the UmuC domain. Residues Asp-8 and Asp-102 each contribute to the Mg(2+) site. Glu-103 is a catalytic residue.

The protein belongs to the DNA polymerase type-Y family. As to quaternary structure, monomer. Mg(2+) is required as a cofactor.

Its subcellular location is the cytoplasm. It carries out the reaction DNA(n) + a 2'-deoxyribonucleoside 5'-triphosphate = DNA(n+1) + diphosphate. Poorly processive, error-prone DNA polymerase involved in untargeted mutagenesis. Copies undamaged DNA at stalled replication forks, which arise in vivo from mismatched or misaligned primer ends. These misaligned primers can be extended by PolIV. Exhibits no 3'-5' exonuclease (proofreading) activity. May be involved in translesional synthesis, in conjunction with the beta clamp from PolIII. This chain is DNA polymerase IV 2 (dinB2), found in Agrobacterium fabrum (strain C58 / ATCC 33970) (Agrobacterium tumefaciens (strain C58)).